The sequence spans 191 residues: Peptidyl-tRNA hydrolase (191 aa).

Tyr15 lines the tRNA pocket. His20 (proton acceptor) is an active-site residue. TRNA-binding residues include Phe66, Asn68, and Asn114.

This sequence belongs to the PTH family. Monomer.

The protein resides in the cytoplasm. It carries out the reaction an N-acyl-L-alpha-aminoacyl-tRNA + H2O = an N-acyl-L-amino acid + a tRNA + H(+). Its function is as follows. Hydrolyzes ribosome-free peptidyl-tRNAs (with 1 or more amino acids incorporated), which drop off the ribosome during protein synthesis, or as a result of ribosome stalling. In terms of biological role, catalyzes the release of premature peptidyl moieties from peptidyl-tRNA molecules trapped in stalled 50S ribosomal subunits, and thus maintains levels of free tRNAs and 50S ribosomes. The chain is Peptidyl-tRNA hydrolase from Streptococcus agalactiae serotype Ia (strain ATCC 27591 / A909 / CDC SS700).